Here is a 123-residue protein sequence, read N- to C-terminus: Large ribosomal subunit protein uL18 (123 aa).

Belongs to the universal ribosomal protein uL18 family. In terms of assembly, part of the 50S ribosomal subunit; part of the 5S rRNA/L5/L18/L25 subcomplex. Contacts the 5S and 23S rRNAs.

Its function is as follows. This is one of the proteins that bind and probably mediate the attachment of the 5S RNA into the large ribosomal subunit, where it forms part of the central protuberance. The protein is Large ribosomal subunit protein uL18 of Bifidobacterium animalis subsp. lactis (strain AD011).